A 429-amino-acid polypeptide reads, in one-letter code: Glucose-1-phosphate adenylyltransferase (429 aa).

Residues Gly162, 177 to 178, and Ser209 each bind alpha-D-glucose 1-phosphate; that span reads EK.

It belongs to the bacterial/plant glucose-1-phosphate adenylyltransferase family. In terms of assembly, homotetramer.

It catalyses the reaction alpha-D-glucose 1-phosphate + ATP + H(+) = ADP-alpha-D-glucose + diphosphate. It functions in the pathway glycan biosynthesis; glycogen biosynthesis. Its function is as follows. Involved in the biosynthesis of ADP-glucose, a building block required for the elongation reactions to produce glycogen. Catalyzes the reaction between ATP and alpha-D-glucose 1-phosphate (G1P) to produce pyrophosphate and ADP-Glc. The chain is Glucose-1-phosphate adenylyltransferase from Cyanothece sp. (strain PCC 7425 / ATCC 29141).